The following is a 256-amino-acid chain: Thiazole synthase (256 aa).

The Schiff-base intermediate with DXP role is filled by lysine 91. Residues glycine 152, 179–180 (AG), and 201–202 (NT) contribute to the 1-deoxy-D-xylulose 5-phosphate site.

It belongs to the ThiG family. In terms of assembly, homotetramer. Forms heterodimers with either ThiH or ThiS.

The protein resides in the cytoplasm. The catalysed reaction is [ThiS sulfur-carrier protein]-C-terminal-Gly-aminoethanethioate + 2-iminoacetate + 1-deoxy-D-xylulose 5-phosphate = [ThiS sulfur-carrier protein]-C-terminal Gly-Gly + 2-[(2R,5Z)-2-carboxy-4-methylthiazol-5(2H)-ylidene]ethyl phosphate + 2 H2O + H(+). The protein operates within cofactor biosynthesis; thiamine diphosphate biosynthesis. In terms of biological role, catalyzes the rearrangement of 1-deoxy-D-xylulose 5-phosphate (DXP) to produce the thiazole phosphate moiety of thiamine. Sulfur is provided by the thiocarboxylate moiety of the carrier protein ThiS. In vitro, sulfur can be provided by H(2)S. This chain is Thiazole synthase, found in Erwinia tasmaniensis (strain DSM 17950 / CFBP 7177 / CIP 109463 / NCPPB 4357 / Et1/99).